The sequence spans 418 residues: Perilipin-1 homolog (418 aa).

The interval 211–275 (LTIGQRVKNL…EKKTWVIEKS (65 aa)) is required for lipid droplet localization.

It belongs to the perilipin family. As to expression, expressed in intestinal and epidermal cells. Expressed in the muscle and hypodermis.

The protein resides in the lipid droplet. Lipid droplet-associated protein which plays a role in lipid droplet clustering. The chain is Perilipin-1 homolog from Caenorhabditis elegans.